The chain runs to 302 residues: NAD kinase 2 (302 aa).

The active-site Proton acceptor is the Asp-78. NAD(+) is bound by residues Asp-78–Gly-79, Asn-152–Glu-153, Asp-182, Thr-193–Ser-198, and Ala-217.

It belongs to the NAD kinase family. A divalent metal cation is required as a cofactor.

The protein localises to the cytoplasm. It catalyses the reaction NAD(+) + ATP = ADP + NADP(+) + H(+). In terms of biological role, involved in the regulation of the intracellular balance of NAD and NADP, and is a key enzyme in the biosynthesis of NADP. Catalyzes specifically the phosphorylation on 2'-hydroxyl of the adenosine moiety of NAD to yield NADP. This Parasynechococcus marenigrum (strain WH8102) protein is NAD kinase 2.